Here is a 187-residue protein sequence, read N- to C-terminus: Dihydrofolate reductase (187 aa).

Residues proline 4–lysine 185 enclose the DHFR domain. Residues isoleucine 8–arginine 37 form an involved in methotrexate binding region. Residues alanine 10 and glycine 16 to aspartate 22 each bind NADP(+). Glutamate 31–glutamine 36 is a binding site for substrate. Lysine 33 is modified (N6-acetyllysine; alternate). Residue lysine 33 is modified to N6-succinyllysine; alternate. Arginine 55–threonine 57 provides a ligand contact to NADP(+). An involved in methotrexate binding region spans residues serine 60 to aspartate 70. Arginine 71 lines the substrate pocket. NADP(+) contacts are provided by residues serine 77–glutamate 79 and glycine 117–glutamate 124. Position 137 (threonine 137) interacts with methotrexate.

The protein belongs to the dihydrofolate reductase family. As to quaternary structure, homodimer.

It localises to the mitochondrion. The protein localises to the cytoplasm. The catalysed reaction is (6S)-5,6,7,8-tetrahydrofolate + NADP(+) = 7,8-dihydrofolate + NADPH + H(+). Its pathway is cofactor biosynthesis; tetrahydrofolate biosynthesis; 5,6,7,8-tetrahydrofolate from 7,8-dihydrofolate: step 1/1. Functionally, key enzyme in folate metabolism. Contributes to the de novo mitochondrial thymidylate biosynthesis pathway. Catalyzes an essential reaction for de novo glycine and purine synthesis, and for DNA precursor synthesis. Binds its own mRNA. This chain is Dihydrofolate reductase (DHFR), found in Mesocricetus auratus (Golden hamster).